The sequence spans 447 residues: Argininosuccinate synthase (447 aa).

ATP-binding positions include 17–25 (AFSGGLDTS) and A43. Y99 is a binding site for L-citrulline. ATP-binding residues include G129 and T131. L-aspartate is bound by residues T131, N135, and D136. Residue N135 coordinates L-citrulline. D136 is an ATP binding site. R139 and S192 together coordinate L-citrulline. D194 is an ATP binding site. 3 residues coordinate L-citrulline: T201, E203, and E280.

This sequence belongs to the argininosuccinate synthase family. Type 2 subfamily. In terms of assembly, homotetramer.

The protein localises to the cytoplasm. It carries out the reaction L-citrulline + L-aspartate + ATP = 2-(N(omega)-L-arginino)succinate + AMP + diphosphate + H(+). Its pathway is amino-acid biosynthesis; L-arginine biosynthesis; L-arginine from L-ornithine and carbamoyl phosphate: step 2/3. The protein is Argininosuccinate synthase of Shigella flexneri serotype 5b (strain 8401).